A 619-amino-acid chain; its full sequence is Sodium-dependent dopamine transporter (619 aa).

Residues 1-56 (MSKSKCSVGPMSSVVAPAKESNAVGPREVELILVKEQNGVQLTNSTLINPPQTPVE) lie on the Cytoplasmic side of the membrane. A discontinuously helical transmembrane segment spans residues 57–95 (AQERETWSKKIDFLLSVIGFAVDLANVWRFPYLCYKNGG). G75, A77, V78, D79, and N82 together coordinate Na(+). D79 serves as a coordination point for dopamine. A run of 2 helical transmembrane segments spans residues 96–127 (GAFL…NREG) and 128–171 (AAGV…FSSF). Positions 149 and 153 each coordinate dopamine. Over 172–235 (TMDLPWIHCN…SRGIDDLGPP (64 aa)) the chain is Extracellular. An intrachain disulfide couples C180 to C189. 4 N-linked (GlcNAc...) asparagine glycosylation sites follow: N181, N188, N196, and N204. 2 consecutive transmembrane segments (helical) span residues 236 to 255 (RWQL…FSLW) and 256 to 286 (KGVK…GVTL). Residues 287 to 305 (PGAMDGIRAYLSVDFYRLC) lie on the Extracellular side of the membrane. A discontinuously helical membrane pass occupies residues 306–334 (EASVWIDAATQVCFSLGVGFGVLIAFSSY). Q316 contributes to the chloride binding site. Position 319 (F319) interacts with dopamine. Residues S320 and N352 each contribute to the Na(+) site. S320 provides a ligand contact to chloride. Residues 335 to 375 (NKFTNNCYRDAIITTSINSLTSFSSGFVVFSFLGYMAQKHN) form a helical membrane-spanning segment. Residue S356 participates in chloride binding. Topologically, residues 376–399 (VPIRDVATDGPGLIFIIYPEAIAT) are extracellular. The next 3 membrane-spanning stretches (helical) occupy residues 400–441 (LPLS…QLLH), 442–465 (RHRE…CVTN), and 466–498 (GGIY…AWFY). L417, D420, and S421 together coordinate Na(+). The dopamine site is built by S421 and A422. The Cytoplasmic portion of the chain corresponds to 499–515 (GVQQFSDDIKQMTGQRP). A helical membrane pass occupies residues 516-541 (NLYWRLCWKLVSPCFLLYVVVVSIVT). Topologically, residues 542–552 (FRPPHYGAYIF) are extracellular. The chain crosses the membrane as a helical span at residues 553-582 (PDWANALGWIIATSSMAMVPIYATYKFCSL). The interaction with TGFB1I1 stretch occupies residues 560 to 589 (GWIIATSSMAMVPIYATYKFCSLPGSFREK). Topologically, residues 583 to 619 (PGSFREKLAYAITPEKDHQLVDRGEVRQFTLRHWLLL) are cytoplasmic.

It belongs to the sodium:neurotransmitter symporter (SNF) (TC 2.A.22) family. SLC6A3 subfamily. In terms of assembly, monomer. Homooligomer; disulfide-linked. Interacts with PRKCABP and TGFB1I1. Interacts (via N-terminus) with SYNGR3 (via N-terminus). Interacts with SLC18A2. Interacts with TOR1A (ATP-bound); TOR1A regulates SLC6A3 subcellular location. Interacts with alpha-synuclein/SNCA. Interacts with SEPTIN4. In terms of tissue distribution, brain. Expressed in the substantia nigra and ventral tegmental area, regions that contain dopaminergic cell bodies.

It localises to the cell membrane. Its subcellular location is the cell projection. The protein resides in the neuron projection. It is found in the axon. It carries out the reaction dopamine(out) + chloride(out) + Na(+)(out) = dopamine(in) + chloride(in) + Na(+)(in). The catalysed reaction is (R)-noradrenaline(out) + chloride(out) + Na(+)(out) = (R)-noradrenaline(in) + chloride(in) + Na(+)(in). The enzyme catalyses dopamine(out) + chloride(out) + 2 Na(+)(out) = dopamine(in) + chloride(in) + 2 Na(+)(in). With respect to regulation, inhibited by mazindol, cocaine, desipramine, GBR 12783 dihydrochloride, GBR 12909 dihydrochloride and nomifensine. Inhibited by zinc ions. Mediates sodium- and chloride-dependent transport of dopamine. Also mediates sodium- and chloride-dependent transport of norepinephrine (also known as noradrenaline). Regulator of light-dependent retinal hyaloid vessel regression, downstream of OPN5 signaling. This is Sodium-dependent dopamine transporter (Slc6a3) from Rattus norvegicus (Rat).